The following is a 139-amino-acid chain: Transthyretin-like protein 5 (139 aa).

A signal peptide spans methionine 1–alanine 15.

Belongs to the nematode transthyretin-like family.

Its subcellular location is the secreted. The sequence is that of Transthyretin-like protein 5 (ttr-5) from Caenorhabditis elegans.